The following is a 449-amino-acid chain: Protein tweety homolog 1 (449 aa).

Topologically, residues 1–43 (MSSSHGYRASWWTYILHQVPHTNFQFEVVDNQFAPQEWPYQQA) are extracellular. A helical transmembrane segment spans residues 44 to 64 (LLFLASIAGLCLAISLILICV). The Cytoplasmic portion of the chain corresponds to 65–86 (YLIRFCCCSSQEDDDSKSHRVC). A helical membrane pass occupies residues 87–107 (CVTWSCVAAVIICCAGIGIGF). The Extracellular portion of the chain corresponds to 108 to 212 (YGNSETNDGV…QVNFIEDYRW (105 aa)). N128 is a glycosylation site (N-linked (GlcNAc...) asparagine). Residues 213–233 (LAYILLLLLDLIICLFTLLGL) traverse the membrane as a helical segment. Residues 234–238 (AKQIK) lie on the Cytoplasmic side of the membrane. A helical membrane pass occupies residues 239-259 (WLVIVMTVVSFFVLLLSWGSM). Residues 260–388 (GLEMATAVGL…LKGLCYDGME (129 aa)) are Extracellular-facing. 2 disulfides stabilise this stretch: C273–C383 and C301–C368. N-linked (GlcNAc...) asparagine glycans are attached at residues N282 and N353. A helical membrane pass occupies residues 389–409 (GILFLLLFSFLSALSFTAAIC). At 410-449 (SLPRAWKRFQNRDLDYDDMDEDDPFNPQESKRFVQWQSSI) the chain is on the cytoplasmic side.

The protein belongs to the tweety family. In terms of assembly, homotetramer; disulfide-linked. Homodimer.

The protein localises to the cell membrane. The catalysed reaction is chloride(in) = chloride(out). It catalyses the reaction L-glutamate(out) = L-glutamate(in). Its function is as follows. May act as a calcium-independent, swelling-dependent volume-regulated anion channel (VRAC-swell) which plays a pivotal role in the process of regulatory volume decrease (RVD) in the brain through the efflux of anions like chloride and organic osmolytes like glutamate. This chain is Protein tweety homolog 1 (ttyh1), found in Xenopus tropicalis (Western clawed frog).